The chain runs to 292 residues: MEFTDLQIFIHLSDTKNFTKTATQNHMSPSTLSRQIQRLEDELGKTLFIRDNRQVKLTEYGEKFLQFAKTEWQNWQQFKQQLKDESDELCGEIKLFCSVTASYSHLPHVLKEFRQRYPKVEIQLTTGDPALALELIQAQQVDLALAGKPNNLPSSVVFHKIDDISLSLIAPRVACLATQLLQEKPIDWQQMPFIFPVEGHARQRIEQWLREKQIKHPKIYATVAGHEGIVPMVGLGFGLAMLPDAVIDSSPMNNQISRLNLDKPIEPFELGICTQKRNLEQPLVRAFWAMLE.

The 58-residue stretch at 1-58 (MEFTDLQIFIHLSDTKNFTKTATQNHMSPSTLSRQIQRLEDELGKTLFIRDNRQVKLT) folds into the HTH lysR-type domain. Positions 18-37 (FTKTATQNHMSPSTLSRQIQ) form a DNA-binding region, H-T-H motif.

Belongs to the LysR transcriptional regulatory family.

The protein resides in the cytoplasm. Functionally, this protein activates the transcription of the ilvC gene in the presence of acetolactate or acetohydroxybutyrate. IlvY is also a negative regulator of its own expression. In Haemophilus influenzae (strain ATCC 51907 / DSM 11121 / KW20 / Rd), this protein is HTH-type transcriptional activator IlvY (ilvY).